A 484-amino-acid polypeptide reads, in one-letter code: tRNA-2-methylthio-N(6)-dimethylallyladenosine synthase (484 aa).

The MTTase N-terminal domain maps to 36-153 (GKLYIKTHGC…LPELIRARRE (118 aa)). Residues Cys45, Cys82, Cys116, Cys190, Cys194, and Cys197 each contribute to the [4Fe-4S] cluster site. Residues 176–415 (RAEGPSAFVS…HINAHAASIS (240 aa)) form the Radical SAM core domain. Positions 416–479 (QSMVGSVQRV…SNSLRGRIQL (64 aa)) constitute a TRAM domain. The segment at 428–450 (EGPSRRDPNELTGKSENMRPVNF) is disordered.

The protein belongs to the methylthiotransferase family. MiaB subfamily. In terms of assembly, monomer. The cofactor is [4Fe-4S] cluster.

The protein resides in the cytoplasm. The enzyme catalyses N(6)-dimethylallyladenosine(37) in tRNA + (sulfur carrier)-SH + AH2 + 2 S-adenosyl-L-methionine = 2-methylsulfanyl-N(6)-dimethylallyladenosine(37) in tRNA + (sulfur carrier)-H + 5'-deoxyadenosine + L-methionine + A + S-adenosyl-L-homocysteine + 2 H(+). Catalyzes the methylthiolation of N6-(dimethylallyl)adenosine (i(6)A), leading to the formation of 2-methylthio-N6-(dimethylallyl)adenosine (ms(2)i(6)A) at position 37 in tRNAs that read codons beginning with uridine. The polypeptide is tRNA-2-methylthio-N(6)-dimethylallyladenosine synthase (Xanthomonas axonopodis pv. citri (strain 306)).